A 1668-amino-acid polypeptide reads, in one-letter code: Zinc finger CCCH domain-containing protein 13 (1668 aa).

2 disordered regions span residues 1–38 and 56–157; these read MSKI…GSTA and TCRF…GDIN. Residues 10–23 show a composition bias toward polar residues; it reads VENTKTISDSTSRR. The C3H1-type zinc-finger motif lies at 36 to 64; it reads STAETQCRNWLKTGNCLYGNTCRFVHGPS. Phosphoserine is present on residues Ser64 and Ser77. Over residues 76-136 the composition is skewed to basic and acidic residues; sequence RSPERPTGDL…IKITKERTPE (61 aa). Residues Lys179 and Lys194 each participate in a glycyl lysine isopeptide (Lys-Gly) (interchain with G-Cter in SUMO2) cross-link. Disordered regions lie at residues 190–1112 and 1125–1466; these read EIII…TATA and AAAT…PISD. A phosphoserine mark is found at Ser198, Ser207, Ser209, and Ser211. The segment covering 204-213 has biased composition (low complexity); sequence SKLSPSPSLR. The segment covering 214–224 has biased composition (basic residues); the sequence is KSSKSPKRKSS. Phosphothreonine is present on Thr237. Ser238 and Ser242 each carry phosphoserine. Residues 239–254 are compositionally biased toward polar residues; that stretch reads AVSSPLLDQQRNSKTN. Thr263 is modified (phosphothreonine). Ser265 is subject to Phosphoserine. The span at 283-315 shows a compositional bias: basic and acidic residues; sequence KYKVKDRIEEKTRDGKDRGRDFERQREKRDKPR. Phosphoserine is present on residues Ser316, Ser318, Ser325, and Ser328. The span at 323–346 shows a compositional bias: low complexity; sequence HHSPISSRHHSSSSQSGSSIQRHS. Phosphothreonine is present on residues Thr354 and Thr364. A phosphoserine mark is found at Ser370, Ser372, and Ser381. The span at 370 to 382 shows a compositional bias: low complexity; the sequence is SASPYPSHSLSSP. 2 stretches are compositionally biased toward basic and acidic residues: residues 394–434 and 442–575; these read PMRE…REER and SSRD…EKGS. A compositionally biased stretch (low complexity) spans 584–593; the sequence is DSHSSNSNYH. Residues 594–640 show a composition bias toward basic and acidic residues; that stretch reads DSWETRSSYPERDRYPERDNRDQARDSSFERRHGERDRRDNRERDQR. Ser643 is modified (phosphoserine). Residues 645-789 are a coiled coil; that stretch reads IRHQGRNDEL…RDKERERQRD (145 aa). Over residues 649–821 the composition is skewed to basic and acidic residues; the sequence is GRNDELERDE…NPRDGHDERK (173 aa). Phosphoserine is present on residues Ser831, Ser833, Ser837, Ser845, Ser848, Ser853, Ser873, Ser875, and Ser877. Residues 881–957 show a composition bias toward basic and acidic residues; it reads LTEDRQGRWK…TSDRAHDENK (77 aa). The residue at position 882 (Thr882) is a Phosphothreonine. At Ser943 the chain carries Phosphoserine. The segment covering 958–969 has biased composition (basic residues); sequence KKAKIQKKPIKK. A compositionally biased stretch (basic and acidic residues) spans 970–981; sequence KKEDDVGIERGN. A phosphoserine mark is found at Ser986, Ser993, Ser1010, Ser1014, and Ser1017. Over residues 996–1010 the composition is skewed to basic residues; the sequence is KGQKKKSIEKKRKKS. Thr1033 is modified (phosphothreonine). A compositionally biased stretch (basic and acidic residues) spans 1073–1083; sequence PDRTEVTEAEH. 2 stretches are compositionally biased toward low complexity: residues 1084–1100 and 1125–1153; these read TATA…LSSL and AAAT…TFAN. The segment covering 1163–1188 has biased composition (basic and acidic residues); it reads TRVEKVETPHVTIEDAQHRKPMDQKR. The residue at position 1170 (Thr1170) is a Phosphothreonine. A phosphoserine mark is found at Ser1191, Ser1194, Ser1208, and Ser1210. Residues 1213–1223 show a composition bias toward basic and acidic residues; sequence SAHRSGDDQSG. Position 1230 is a phosphoserine (Ser1230). 2 stretches are compositionally biased toward basic and acidic residues: residues 1231–1286 and 1294–1379; these read GSRD…DRQV and DSRD…DRTF. A coiled-coil region spans residues 1300 to 1366; the sequence is QERDRYEHDR…RERERLISDS (67 aa). Residues Ser1364, Ser1366, Ser1382, Ser1386, Ser1406, Ser1409, Ser1438, Leu1453, Gly1456, Ser1465, and Asp1466 each carry the phosphoserine modification. Basic and acidic residues-rich tracts occupy residues 1386–1421 and 1429–1438; these read SVKR…DKDL and ETNKSERTES.

It belongs to the ZC3H13 family. As to quaternary structure, component of the WMM complex, a N6-methyltransferase complex composed of a catalytic subcomplex, named MAC, and of an associated subcomplex, named MACOM. The MAC subcomplex is composed of METTL3 and METTL14. The MACOM subcomplex is composed of WTAP, ZC3H13, CBLL1/HAKAI, VIRMA, and, in some cases of RBM15 (RBM15 or RBM15B). Also a component of a MACOM-like complex, named WTAP complex, composed of WTAP, ZC3H13, CBLL1/HAKAI, VIRMA, RBM15, BCLAF1 and THRAP3.

It localises to the nucleus speckle. It is found in the nucleus. Its subcellular location is the nucleoplasm. Associated component of the WMM complex, a complex that mediates N6-methyladenosine (m6A) methylation of RNAs, a modification that plays a role in the efficiency of mRNA splicing and RNA processing. Acts as a key regulator of m6A methylation by promoting m6A methylation of mRNAs at the 3'-UTR. Controls embryonic stem cells (ESCs) pluripotency via its role in m6A methylation. In the WMM complex, anchors component of the MACOM subcomplex in the nucleus. Also required for bridging WTAP to the RNA-binding component RBM15 (RBM15 or RBM15B). The chain is Zinc finger CCCH domain-containing protein 13 from Homo sapiens (Human).